Here is a 356-residue protein sequence, read N- to C-terminus: 3-isopropylmalate dehydrogenase (356 aa).

The substrate site is built by Arg91, Arg101, Arg129, and Asp223. Residues Asp223, Asp247, and Asp251 each contribute to the Mg(2+) site. 281 to 293 contributes to the NAD(+) binding site; that stretch reads GSAPDIAGKGIAN.

This sequence belongs to the isocitrate and isopropylmalate dehydrogenases family. LeuB type 1 subfamily. Homodimer. Requires Mg(2+) as cofactor. It depends on Mn(2+) as a cofactor.

The protein localises to the cytoplasm. It catalyses the reaction (2R,3S)-3-isopropylmalate + NAD(+) = 4-methyl-2-oxopentanoate + CO2 + NADH. It functions in the pathway amino-acid biosynthesis; L-leucine biosynthesis; L-leucine from 3-methyl-2-oxobutanoate: step 3/4. In terms of biological role, catalyzes the oxidation of 3-carboxy-2-hydroxy-4-methylpentanoate (3-isopropylmalate) to 3-carboxy-4-methyl-2-oxopentanoate. The product decarboxylates to 4-methyl-2 oxopentanoate. This is 3-isopropylmalate dehydrogenase from Ralstonia nicotianae (strain ATCC BAA-1114 / GMI1000) (Ralstonia solanacearum).